The primary structure comprises 139 residues: Small ribosomal subunit protein uS12 (139 aa).

Asp-102 is subject to 3-methylthioaspartic acid.

The protein belongs to the universal ribosomal protein uS12 family. As to quaternary structure, part of the 30S ribosomal subunit. Contacts proteins S8 and S17. May interact with IF1 in the 30S initiation complex.

In terms of biological role, with S4 and S5 plays an important role in translational accuracy. Its function is as follows. Interacts with and stabilizes bases of the 16S rRNA that are involved in tRNA selection in the A site and with the mRNA backbone. Located at the interface of the 30S and 50S subunits, it traverses the body of the 30S subunit contacting proteins on the other side and probably holding the rRNA structure together. The combined cluster of proteins S8, S12 and S17 appears to hold together the shoulder and platform of the 30S subunit. The protein is Small ribosomal subunit protein uS12 of Mycoplasma capricolum subsp. capricolum (strain California kid / ATCC 27343 / NCTC 10154).